The primary structure comprises 660 residues: UvrABC system protein B (660 aa).

The Helicase ATP-binding domain maps to 25–183 (EGLNKGLKHQ…ALINIHYERN (159 aa)). 38–45 (GVTGSGKT) is an ATP binding site. The Beta-hairpin signature appears at 91–114 (YYDYYQPEAYLPTTDTYIEKDSSV). The Helicase C-terminal domain maps to 431 to 593 (QIDDLIGEVN…IVPQTIHKAL (163 aa)). Positions 622–657 (ADMVIELEAEMHLAAKNLEFERAAALRDNIKELRST) constitute a UVR domain.

Belongs to the UvrB family. In terms of assembly, forms a heterotetramer with UvrA during the search for lesions. Interacts with UvrC in an incision complex.

The protein resides in the cytoplasm. The UvrABC repair system catalyzes the recognition and processing of DNA lesions. A damage recognition complex composed of 2 UvrA and 2 UvrB subunits scans DNA for abnormalities. Upon binding of the UvrA(2)B(2) complex to a putative damaged site, the DNA wraps around one UvrB monomer. DNA wrap is dependent on ATP binding by UvrB and probably causes local melting of the DNA helix, facilitating insertion of UvrB beta-hairpin between the DNA strands. Then UvrB probes one DNA strand for the presence of a lesion. If a lesion is found the UvrA subunits dissociate and the UvrB-DNA preincision complex is formed. This complex is subsequently bound by UvrC and the second UvrB is released. If no lesion is found, the DNA wraps around the other UvrB subunit that will check the other stand for damage. This chain is UvrABC system protein B, found in Methanococcoides burtonii (strain DSM 6242 / NBRC 107633 / OCM 468 / ACE-M).